A 261-amino-acid polypeptide reads, in one-letter code: Triosephosphate isomerase (261 aa).

A substrate-binding site is contributed by 10–12; that stretch reads NWK. Catalysis depends on His100, which acts as the Electrophile. The Proton acceptor role is filled by Glu172. Substrate contacts are provided by residues Gly178, Ser218, and 239–240; that span reads GG.

It belongs to the triosephosphate isomerase family. In terms of assembly, homodimer.

The protein resides in the cytoplasm. It catalyses the reaction D-glyceraldehyde 3-phosphate = dihydroxyacetone phosphate. Its pathway is carbohydrate biosynthesis; gluconeogenesis. The protein operates within carbohydrate degradation; glycolysis; D-glyceraldehyde 3-phosphate from glycerone phosphate: step 1/1. Functionally, involved in the gluconeogenesis. Catalyzes stereospecifically the conversion of dihydroxyacetone phosphate (DHAP) to D-glyceraldehyde-3-phosphate (G3P). The chain is Triosephosphate isomerase from Mycobacterium marinum (strain ATCC BAA-535 / M).